The following is a 183-amino-acid chain: Der GTPase-activating protein YihI (183 aa).

Residues 1–101 form a disordered region; that stretch reads MSRSKKTRKG…KLTDEQKLLK (101 aa). 2 stretches are compositionally biased toward basic and acidic residues: residues 22–46 and 92–101; these read KKQD…RHNE and KLTDEQKLLK.

The protein belongs to the YihI family. Interacts with Der.

In terms of biological role, a GTPase-activating protein (GAP) that modifies Der/EngA GTPase function. May play a role in ribosome biogenesis. This is Der GTPase-activating protein YihI from Shewanella oneidensis (strain ATCC 700550 / JCM 31522 / CIP 106686 / LMG 19005 / NCIMB 14063 / MR-1).